Here is a 397-residue protein sequence, read N- to C-terminus: Galactokinase (397 aa).

Residues 1–27 form a disordered region; it reads MGEAVGEPSASGSGSCTGRSRRGCGRR. Residues 9-18 show a composition bias toward low complexity; it reads SASGSGSCTG. 36 to 39 serves as a coordination point for substrate; that stretch reads EHTD. ATP contacts are provided by residues Ser69 and 124 to 130; that span reads GAGLSSS. Positions 130 and 161 each coordinate Mg(2+). Asp173 functions as the Proton acceptor in the catalytic mechanism. Tyr225 contributes to the substrate binding site.

It belongs to the GHMP kinase family. GalK subfamily.

The protein resides in the cytoplasm. The catalysed reaction is alpha-D-galactose + ATP = alpha-D-galactose 1-phosphate + ADP + H(+). It functions in the pathway carbohydrate metabolism; galactose metabolism. Catalyzes the transfer of the gamma-phosphate of ATP to D-galactose to form alpha-D-galactose-1-phosphate (Gal-1-P). This chain is Galactokinase, found in Streptomyces lividans.